We begin with the raw amino-acid sequence, 471 residues long: Cysteine--tRNA ligase (471 aa).

C29 contacts Zn(2+). Residues 31–41 (PTVYNYIHIGN) carry the 'HIGH' region motif. Zn(2+)-binding residues include C209, H234, and E238. The 'KMSKS' region motif lies at 266-270 (KMSKS). ATP is bound at residue K269.

This sequence belongs to the class-I aminoacyl-tRNA synthetase family. Monomer. Zn(2+) is required as a cofactor.

Its subcellular location is the cytoplasm. It catalyses the reaction tRNA(Cys) + L-cysteine + ATP = L-cysteinyl-tRNA(Cys) + AMP + diphosphate. The polypeptide is Cysteine--tRNA ligase (Listeria monocytogenes serovar 1/2a (strain ATCC BAA-679 / EGD-e)).